The primary structure comprises 194 residues: Fe/S biogenesis protein NfuA (194 aa).

[4Fe-4S] cluster contacts are provided by C152 and C155.

Belongs to the NfuA family. Homodimer. Requires [4Fe-4S] cluster as cofactor.

Its function is as follows. Involved in iron-sulfur cluster biogenesis. Binds a 4Fe-4S cluster, can transfer this cluster to apoproteins, and thereby intervenes in the maturation of Fe/S proteins. Could also act as a scaffold/chaperone for damaged Fe/S proteins. The protein is Fe/S biogenesis protein NfuA of Pseudomonas fluorescens (strain SBW25).